Consider the following 99-residue polypeptide: Adenine DNA glycosylase (99 aa).

Residue Glu-40 is the Proton donor/acceptor of the active site.

This sequence belongs to the Nth/MutY family. Monomer. It depends on [4Fe-4S] cluster as a cofactor.

The catalysed reaction is Hydrolyzes free adenine bases from 7,8-dihydro-8-oxoguanine:adenine mismatched double-stranded DNA, leaving an apurinic site.. In terms of biological role, adenine glycosylase active on G-A mispairs. MutY also corrects error-prone DNA synthesis past GO lesions which are due to the oxidatively damaged form of guanine: 7,8-dihydro-8-oxoguanine (8-oxo-dGTP). This chain is Adenine DNA glycosylase (mutY), found in Aeromonas hydrophila.